A 343-amino-acid chain; its full sequence is Anthranilate phosphoribosyltransferase (343 aa).

Residues glycine 86, 89-90 (GD), threonine 94, 96-99 (NIST), 114-122 (KHGNRSASG), and serine 126 contribute to the 5-phospho-alpha-D-ribose 1-diphosphate site. Glycine 86 lines the anthranilate pocket. Residue serine 98 participates in Mg(2+) binding. Asparagine 117 contacts anthranilate. Arginine 172 contacts anthranilate. Positions 231 and 232 each coordinate Mg(2+).

The protein belongs to the anthranilate phosphoribosyltransferase family. In terms of assembly, homodimer. The cofactor is Mg(2+).

The catalysed reaction is N-(5-phospho-beta-D-ribosyl)anthranilate + diphosphate = 5-phospho-alpha-D-ribose 1-diphosphate + anthranilate. It functions in the pathway amino-acid biosynthesis; L-tryptophan biosynthesis; L-tryptophan from chorismate: step 2/5. In terms of biological role, catalyzes the transfer of the phosphoribosyl group of 5-phosphorylribose-1-pyrophosphate (PRPP) to anthranilate to yield N-(5'-phosphoribosyl)-anthranilate (PRA). This is Anthranilate phosphoribosyltransferase from Synechococcus sp. (strain JA-3-3Ab) (Cyanobacteria bacterium Yellowstone A-Prime).